Reading from the N-terminus, the 566-residue chain is E3 ubiquitin-protein ligase RNF220 (566 aa).

A Glycyl lysine isopeptide (Lys-Gly) (interchain with G-Cter in SUMO2) cross-link involves residue Lys277. Residues 277 to 297 are disordered; sequence KREGESPTASPHSSATDDLHH. Ser390 carries the phosphoserine modification. Residues 485–513 are a coiled coil; the sequence is EDSAVTTFEALKARVRELERQLSRGDRYK. A required for targeting to the cytoplasm region spans residues 514-522; the sequence is CLICMDSYS. Residues 514–553 form an RING-type zinc finger; that stretch reads CLICMDSYSMPLTSIQCWHVHCEECWLRTLGAKKLCPQCY.

As to quaternary structure, interacts with SIN3B. Interacts with CTNNB1 (via Armadillo repeats 2-8). Interacts with USP7 (via MATH domain). Post-translationally, auto-ubiquitinated; leads to proteasomal degradation.

Its subcellular location is the cytoplasm. The catalysed reaction is S-ubiquitinyl-[E2 ubiquitin-conjugating enzyme]-L-cysteine + [acceptor protein]-L-lysine = [E2 ubiquitin-conjugating enzyme]-L-cysteine + N(6)-ubiquitinyl-[acceptor protein]-L-lysine.. Its pathway is protein modification; protein ubiquitination. In terms of biological role, E3 ubiquitin-protein ligase that promotes the ubiquitination and proteasomal degradation of SIN3B. Independently of its E3 ligase activity, acts as a CTNNB1 stabilizer through USP7-mediated deubiquitination of CTNNB1 promoting Wnt signaling. In Bos taurus (Bovine), this protein is E3 ubiquitin-protein ligase RNF220 (RNF220).